Consider the following 61-residue polypeptide: Small ribosomal subunit protein uS14 (61 aa).

Positions 24, 27, 40, and 43 each coordinate Zn(2+).

This sequence belongs to the universal ribosomal protein uS14 family. Zinc-binding uS14 subfamily. In terms of assembly, part of the 30S ribosomal subunit. Contacts proteins S3 and S10. Requires Zn(2+) as cofactor.

In terms of biological role, binds 16S rRNA, required for the assembly of 30S particles and may also be responsible for determining the conformation of the 16S rRNA at the A site. The protein is Small ribosomal subunit protein uS14 of Thermobifida fusca (strain YX).